Reading from the N-terminus, the 380-residue chain is Epoxyqueuosine reductase (380 aa).

Catalysis depends on aspartate 139, which acts as the Proton donor. Residues 181-213 (IPFEPDDPLLDSCGDCTICVDRCPTSALVGNGQ) enclose the 4Fe-4S ferredoxin-type 1 domain. Cysteine 193, cysteine 196, cysteine 199, cysteine 203, cysteine 219, cysteine 245, cysteine 248, and cysteine 252 together coordinate [4Fe-4S] cluster. Positions 234–263 (YRYKIGNRLYGCDTCQQVCPKNRGINTEQD) constitute a 4Fe-4S ferredoxin-type 2 domain.

The protein belongs to the QueG family. In terms of assembly, monomer. Cob(II)alamin is required as a cofactor. The cofactor is [4Fe-4S] cluster.

The protein resides in the cytoplasm. The catalysed reaction is epoxyqueuosine(34) in tRNA + AH2 = queuosine(34) in tRNA + A + H2O. Its pathway is tRNA modification; tRNA-queuosine biosynthesis. Functionally, catalyzes the conversion of epoxyqueuosine (oQ) to queuosine (Q), which is a hypermodified base found in the wobble positions of tRNA(Asp), tRNA(Asn), tRNA(His) and tRNA(Tyr). The protein is Epoxyqueuosine reductase of Staphylococcus aureus (strain NCTC 8325 / PS 47).